The following is a 95-amino-acid chain: Aspartyl/glutamyl-tRNA(Asn/Gln) amidotransferase subunit C (95 aa).

Belongs to the GatC family. As to quaternary structure, heterotrimer of A, B and C subunits.

It carries out the reaction L-glutamyl-tRNA(Gln) + L-glutamine + ATP + H2O = L-glutaminyl-tRNA(Gln) + L-glutamate + ADP + phosphate + H(+). The enzyme catalyses L-aspartyl-tRNA(Asn) + L-glutamine + ATP + H2O = L-asparaginyl-tRNA(Asn) + L-glutamate + ADP + phosphate + 2 H(+). Its function is as follows. Allows the formation of correctly charged Asn-tRNA(Asn) or Gln-tRNA(Gln) through the transamidation of misacylated Asp-tRNA(Asn) or Glu-tRNA(Gln) in organisms which lack either or both of asparaginyl-tRNA or glutaminyl-tRNA synthetases. The reaction takes place in the presence of glutamine and ATP through an activated phospho-Asp-tRNA(Asn) or phospho-Glu-tRNA(Gln). The chain is Aspartyl/glutamyl-tRNA(Asn/Gln) amidotransferase subunit C from Citrifermentans bemidjiense (strain ATCC BAA-1014 / DSM 16622 / JCM 12645 / Bem) (Geobacter bemidjiensis).